The following is a 338-amino-acid chain: MHIAALHQPSQVQLNQDGNLKHFLTIEGLSKENLTKILDTAQSFLDDNNNLINRPLLEGRTVMNLFFENSTRTRTTFEAAAKRLSANVLNIDIARSSTSKGETLRDTLWNLEAMAADIFVVRHSSSGAAHFIAKDVCPKVAIINAGDGRHAHPTQAMLDMLTIRRETKKSFEDLSVAIIGDIKHSRVARSDVAALQTLGCKDIRVIAPNTLLPVGFSEYGDHVRLFNNMDEGITGCDVIIALRIQNERIDSPALSSQSEFYRMYGLNKERLSLAKPDCIVMHPGPMNRGVEIDSSIADGEQSVILKQVTNGIAVRMAVLALSMQGQLQEQGLIEAIAL.

Residues Arg-72 and Thr-73 each coordinate carbamoyl phosphate. Position 100 (Lys-100) interacts with L-aspartate. Positions 122, 152, and 155 each coordinate carbamoyl phosphate. L-aspartate contacts are provided by Arg-186 and Arg-243. Gly-284 and Pro-285 together coordinate carbamoyl phosphate.

Belongs to the aspartate/ornithine carbamoyltransferase superfamily. ATCase family. As to quaternary structure, heterododecamer (2C3:3R2) of six catalytic PyrB chains organized as two trimers (C3), and six regulatory PyrI chains organized as three dimers (R2).

It carries out the reaction carbamoyl phosphate + L-aspartate = N-carbamoyl-L-aspartate + phosphate + H(+). The protein operates within pyrimidine metabolism; UMP biosynthesis via de novo pathway; (S)-dihydroorotate from bicarbonate: step 2/3. Catalyzes the condensation of carbamoyl phosphate and aspartate to form carbamoyl aspartate and inorganic phosphate, the committed step in the de novo pyrimidine nucleotide biosynthesis pathway. The sequence is that of Aspartate carbamoyltransferase catalytic subunit from Acinetobacter baumannii (strain AB307-0294).